Consider the following 299-residue polypeptide: Oxygen-dependent coproporphyrinogen-III oxidase (299 aa).

Residue S92 coordinates substrate. A divalent metal cation-binding residues include H96 and H106. H106 (proton donor) is an active-site residue. Position 108-110 (108-110 (NVR)) interacts with substrate. The a divalent metal cation site is built by H145 and H175. The important for dimerization stretch occupies residues 239-274 (YVEFNLVYDRGTLFGLQSGGRAESILMSLPPRVRWE). 257–259 (GGR) lines the substrate pocket.

The protein belongs to the aerobic coproporphyrinogen-III oxidase family. As to quaternary structure, homodimer. It depends on a divalent metal cation as a cofactor.

The protein resides in the cytoplasm. The catalysed reaction is coproporphyrinogen III + O2 + 2 H(+) = protoporphyrinogen IX + 2 CO2 + 2 H2O. It participates in porphyrin-containing compound metabolism; protoporphyrin-IX biosynthesis; protoporphyrinogen-IX from coproporphyrinogen-III (O2 route): step 1/1. In terms of biological role, involved in the heme biosynthesis. Catalyzes the aerobic oxidative decarboxylation of propionate groups of rings A and B of coproporphyrinogen-III to yield the vinyl groups in protoporphyrinogen-IX. The protein is Oxygen-dependent coproporphyrinogen-III oxidase of Xanthomonas oryzae pv. oryzae (strain MAFF 311018).